A 535-amino-acid chain; its full sequence is 3-hydroxyindolin-2-one monooxygenase (535 aa).

The next 2 helical transmembrane spans lie at 14-34 (VVQCTPTQAAAVLGVLLLLAI) and 469-489 (ICAGATFAIATVEIMLANLIY). Cys-470 contacts heme.

Belongs to the cytochrome P450 family. The cofactor is heme.

The protein localises to the membrane. It carries out the reaction 3-hydroxyindolin-2-one + reduced [NADPH--hemoprotein reductase] + O2 = 2-hydroxy-2H-1,4-benzoxazin-3(4H)-one + oxidized [NADPH--hemoprotein reductase] + H2O + H(+). Its pathway is secondary metabolite biosynthesis; 2,4-dihydroxy-1,4-benzoxazin-3-one biosynthesis; 2,4-dihydroxy-1,4-benzoxazin-3-one from indoleglycerol phosphate: step 4/5. Functionally, catalyzes the conversion of 3-hydroxyindolin-2-one to 2-hydroxy-1,4-benzoxazin-3-one (HBOA). The polypeptide is 3-hydroxyindolin-2-one monooxygenase (CYP71C1) (Zea mays (Maize)).